The primary structure comprises 386 residues: Succinate--CoA ligase [ADP-forming] subunit beta (386 aa).

Residues 9–244 form the ATP-grasp domain; it reads KAVLRSYGVS…LDEEDAKEIE (236 aa). Residues Lys46, 53 to 55, Glu99, Cys102, and Glu107 contribute to the ATP site; that span reads GRG. Positions 199 and 213 each coordinate Mg(2+). Substrate-binding positions include Asn264 and 321–323; that span reads GIM.

It belongs to the succinate/malate CoA ligase beta subunit family. Heterotetramer of two alpha and two beta subunits. The cofactor is Mg(2+).

The catalysed reaction is succinate + ATP + CoA = succinyl-CoA + ADP + phosphate. It catalyses the reaction GTP + succinate + CoA = succinyl-CoA + GDP + phosphate. It functions in the pathway carbohydrate metabolism; tricarboxylic acid cycle; succinate from succinyl-CoA (ligase route): step 1/1. Its function is as follows. Succinyl-CoA synthetase functions in the citric acid cycle (TCA), coupling the hydrolysis of succinyl-CoA to the synthesis of either ATP or GTP and thus represents the only step of substrate-level phosphorylation in the TCA. The beta subunit provides nucleotide specificity of the enzyme and binds the substrate succinate, while the binding sites for coenzyme A and phosphate are found in the alpha subunit. This chain is Succinate--CoA ligase [ADP-forming] subunit beta, found in Bacillus thuringiensis (strain Al Hakam).